A 175-amino-acid polypeptide reads, in one-letter code: Bifunctional protein PyrR (175 aa).

Positions isoleucine 97–threonine 109 match the PRPP-binding motif.

Belongs to the purine/pyrimidine phosphoribosyltransferase family. PyrR subfamily. As to quaternary structure, homodimer and homohexamer; in equilibrium.

The catalysed reaction is UMP + diphosphate = 5-phospho-alpha-D-ribose 1-diphosphate + uracil. Its function is as follows. Regulates transcriptional attenuation of the pyrimidine nucleotide (pyr) operon by binding in a uridine-dependent manner to specific sites on pyr mRNA. This disrupts an antiterminator hairpin in the RNA and favors formation of a downstream transcription terminator, leading to a reduced expression of downstream genes. Functionally, also displays a weak uracil phosphoribosyltransferase activity which is not physiologically significant. This Leuconostoc mesenteroides subsp. mesenteroides (strain ATCC 8293 / DSM 20343 / BCRC 11652 / CCM 1803 / JCM 6124 / NCDO 523 / NBRC 100496 / NCIMB 8023 / NCTC 12954 / NRRL B-1118 / 37Y) protein is Bifunctional protein PyrR.